We begin with the raw amino-acid sequence, 178 residues long: Ribosome maturation factor RimP (178 aa).

It belongs to the RimP family.

Its subcellular location is the cytoplasm. Its function is as follows. Required for maturation of 30S ribosomal subunits. This chain is Ribosome maturation factor RimP, found in Mycolicibacterium paratuberculosis (strain ATCC BAA-968 / K-10) (Mycobacterium paratuberculosis).